Reading from the N-terminus, the 607-residue chain is MDYRSLGLKTGLEIHIQLNTRRKLFCHCPPVLRDDEPHFRLERRLHVSVSELGAVDPAVMWEVRKRRRYVYEGYRDTTCLVELDEEPPHLPDEEALATAVAVAKMFNAKLFDEIHVMRKTVVDGSNVSGFQRTMLVAYGGRAKILGYDIGVETIALEEDAARKIAEEGKTVIYRLDRLGVPLIEIATEPMTYTPQQVEEVAWIIGYSVKITGRAKRGLGTVRQDVNVSIAGGAKTEIKGVPDLSLIPKVIEYEVQRQLNLLRIAEELKRRGVGRVEPSLVDVTQAFANTKSKVVKRVLEAGGRVVALKTPGFQKLLGAEVQPGRRFGTELADYVRAWTELGGLLHSDELPGYGITAEEVREVAARAGAESFVLLMGTDERELAEAAAVVAERLNAAPRGVPEETRGANPDGTTRFLRPRPGAARMYPETDIPPVKITFEILRKAEEVAKASIEGKLAELTSMGLSRDMALQLIKSPHLEKFEDLVAKYKVPPQQIATILLNVSKALAREGVEVTDEKIASVLDALAKRVITKEAVEEVLRNMKAGESAEEAARRLGLLRMPYDEVKKVVEEVVKAVGREKALGEVMRRYRGRVDVEDVKRAISEIHF.

The disordered stretch occupies residues 399–428 (GVPEETRGANPDGTTRFLRPRPGAARMYPE).

The protein belongs to the GatB/GatE family. GatE subfamily. As to quaternary structure, heterodimer of GatD and GatE.

It catalyses the reaction L-glutamyl-tRNA(Gln) + L-glutamine + ATP + H2O = L-glutaminyl-tRNA(Gln) + L-glutamate + ADP + phosphate + H(+). Its function is as follows. Allows the formation of correctly charged Gln-tRNA(Gln) through the transamidation of misacylated Glu-tRNA(Gln) in organisms which lack glutaminyl-tRNA synthetase. The reaction takes place in the presence of glutamine and ATP through an activated gamma-phospho-Glu-tRNA(Gln). The GatDE system is specific for glutamate and does not act on aspartate. The chain is Glutamyl-tRNA(Gln) amidotransferase subunit E from Pyrobaculum neutrophilum (strain DSM 2338 / JCM 9278 / NBRC 100436 / V24Sta) (Thermoproteus neutrophilus).